Consider the following 409-residue polypeptide: Na(+)/H(+) antiporter NhaA (409 aa).

Helical transmembrane passes span 13–33 (SGGI…NTFL), 58–78 (LILW…GLEL), 93–113 (IALP…IFYL), 120–140 (FALG…LGIL), 153–173 (IFLM…IALF), 176–196 (SELS…LFAL), 216–236 (VAVL…AFFI), 256–276 (LHGW…AGIS), 279–299 (GVGL…GLFV), 326–346 (FIQL…SLFI), and 363–383 (LAIL…LKFS).

The protein belongs to the NhaA Na(+)/H(+) (TC 2.A.33) antiporter family.

The protein resides in the cell inner membrane. It carries out the reaction Na(+)(in) + 2 H(+)(out) = Na(+)(out) + 2 H(+)(in). In terms of biological role, na(+)/H(+) antiporter that extrudes sodium in exchange for external protons. In Campylobacter concisus (strain 13826), this protein is Na(+)/H(+) antiporter NhaA.